The sequence spans 442 residues: tRNA-2-methylthio-N(6)-dimethylallyladenosine synthase (442 aa).

The MTTase N-terminal domain maps to N3–N120. [4Fe-4S] cluster contacts are provided by C12, C49, C83, C157, C161, and C164. The Radical SAM core domain occupies R143–H375. One can recognise a TRAM domain in the interval Q378–T440.

This sequence belongs to the methylthiotransferase family. MiaB subfamily. As to quaternary structure, monomer. [4Fe-4S] cluster is required as a cofactor.

The protein localises to the cytoplasm. The enzyme catalyses N(6)-dimethylallyladenosine(37) in tRNA + (sulfur carrier)-SH + AH2 + 2 S-adenosyl-L-methionine = 2-methylsulfanyl-N(6)-dimethylallyladenosine(37) in tRNA + (sulfur carrier)-H + 5'-deoxyadenosine + L-methionine + A + S-adenosyl-L-homocysteine + 2 H(+). Functionally, catalyzes the methylthiolation of N6-(dimethylallyl)adenosine (i(6)A), leading to the formation of 2-methylthio-N6-(dimethylallyl)adenosine (ms(2)i(6)A) at position 37 in tRNAs that read codons beginning with uridine. The protein is tRNA-2-methylthio-N(6)-dimethylallyladenosine synthase of Vesicomyosocius okutanii subsp. Calyptogena okutanii (strain HA).